Reading from the N-terminus, the 615-residue chain is DNA mismatch repair protein MutL (615 aa).

A disordered region spans residues 363-397; sequence FAEPAAREPVAPRYTPAPASGSRPAAPWPNAQPGY. Over residues 364-391 the composition is skewed to low complexity; that stretch reads AEPAAREPVAPRYTPAPASGSRPAAPWP.

This sequence belongs to the DNA mismatch repair MutL/HexB family.

In terms of biological role, this protein is involved in the repair of mismatches in DNA. It is required for dam-dependent methyl-directed DNA mismatch repair. May act as a 'molecular matchmaker', a protein that promotes the formation of a stable complex between two or more DNA-binding proteins in an ATP-dependent manner without itself being part of a final effector complex. The sequence is that of DNA mismatch repair protein MutL from Shigella boydii serotype 4 (strain Sb227).